Here is a 416-residue protein sequence, read N- to C-terminus: FBD-associated F-box protein At3g52670 (416 aa).

Residues 9–62 (EDRMNQLPEDLILRILSFLPTELVIATSVLSKQWRSLWKLVPNLEFDSDDYESE) form the F-box domain. The FBD domain occupies 327–378 (KWNEPKYVPECLLSHLETFVWIRYDWEREEEKEVATYILRNARWLKKGTIST).

The chain is FBD-associated F-box protein At3g52670 from Arabidopsis thaliana (Mouse-ear cress).